The primary structure comprises 356 residues: Phospho-2-dehydro-3-deoxyheptonate aldolase, Tyr-sensitive (356 aa).

This sequence belongs to the class-I DAHP synthase family.

It carries out the reaction D-erythrose 4-phosphate + phosphoenolpyruvate + H2O = 7-phospho-2-dehydro-3-deoxy-D-arabino-heptonate + phosphate. The protein operates within metabolic intermediate biosynthesis; chorismate biosynthesis; chorismate from D-erythrose 4-phosphate and phosphoenolpyruvate: step 1/7. In terms of biological role, stereospecific condensation of phosphoenolpyruvate (PEP) and D-erythrose-4-phosphate (E4P) giving rise to 3-deoxy-D-arabino-heptulosonate-7-phosphate (DAHP). In Salmonella typhi, this protein is Phospho-2-dehydro-3-deoxyheptonate aldolase, Tyr-sensitive (aroF).